We begin with the raw amino-acid sequence, 1642 residues long: Mitochondrial 3' processome subunit 2 (1642 aa).

The N-terminal 27 residues, 1–27, are a transit peptide targeting the mitochondrion; that stretch reads MGLPFLCHTRVCLFSNKIPFVLCGSRF. 2 disordered regions span residues 43 to 69 and 745 to 772; these read ETLNFPELSSPSTSKEPSVGSDSPQKK and KGEKTDVVQHQQPSRLNEGGELPTLSGP. Over residues 49–65 the composition is skewed to polar residues; that stretch reads ELSSPSTSKEPSVGSDS.

Component of the mitochondrial 3' processome (MPsome) complex composed at least of terminal uridylyltransferase KRET1/TUT1, 3'-5' exonuclease DSS1, MPSS1, MPSS2 and MPSS3. Within the complex, interacts with DSS1.

The protein resides in the mitochondrion. In terms of biological role, as part of the mitochondrial 3' processome (MPsome), involved in the maturation of guided RNA (gRNA) precursors. This Trypanosoma brucei brucei protein is Mitochondrial 3' processome subunit 2.